The chain runs to 138 residues: Histone H2B.4 (138 aa).

Over residues 1–39 (MAPKAAEKKPAEKKPAGKAPAEKLPKAEKKISKDAGGSE) the composition is skewed to basic and acidic residues. Residues 1 to 48 (MAPKAAEKKPAEKKPAGKAPAEKLPKAEKKISKDAGGSEKKKKKSKKS) form a disordered region. A2 carries the n,N,N-trimethylalanine; alternate modification. A2 is modified (n,N-dimethylalanine; alternate). Position 2 is an N-methylalanine; alternate (A2). An N6-methyllysine modification is found at K4. N6-acetyllysine occurs at positions 8 and 13. K14 is modified (N6,N6-dimethyllysine). Residues K18, K23, K29, and K30 each carry the N6-acetyllysine modification. K135 is covalently cross-linked (Glycyl lysine isopeptide (Lys-Gly) (interchain with G-Cter in ubiquitin)).

The protein belongs to the histone H2B family. The nucleosome is a histone octamer containing two molecules each of H2A, H2B, H3 and H4 assembled in one H3-H4 heterotetramer and two H2A-H2B heterodimers. The octamer wraps approximately 147 bp of DNA. Can be acetylated to form H2BK6ac, H2BK33ac and H2BK34ac. In terms of processing, monoubiquitinated by BRE1 to form H2BK143ub1 and deubiquitinated by UBP26. Required for heterochromatic histone H3 di- and trimethylation at H3K4me. May give a specific tag for epigenetic transcriptional activation.

The protein localises to the nucleus. Its subcellular location is the chromosome. In terms of biological role, core component of nucleosome. Nucleosomes wrap and compact DNA into chromatin, limiting DNA accessibility to the cellular machineries which require DNA as a template. Histones thereby play a central role in transcription regulation, DNA repair, DNA replication and chromosomal stability. DNA accessibility is regulated via a complex set of post-translational modifications of histones, also called histone code, and nucleosome remodeling. In Arabidopsis thaliana (Mouse-ear cress), this protein is Histone H2B.4.